Consider the following 229-residue polypeptide: Potassium/proton antiporter CemA (229 aa).

The next 4 membrane-spanning stretches (helical) occupy residues 7–27 (FTPL…SFSF), 114–134 (IISF…LVVL), 154–174 (ILLL…ELMI), and 189–209 (IISG…KYWI).

It belongs to the CemA family.

It localises to the plastid. The protein localises to the chloroplast inner membrane. The catalysed reaction is K(+)(in) + H(+)(out) = K(+)(out) + H(+)(in). Contributes to K(+)/H(+) antiport activity by supporting proton efflux to control proton extrusion and homeostasis in chloroplasts in a light-dependent manner to modulate photosynthesis. Prevents excessive induction of non-photochemical quenching (NPQ) under continuous-light conditions. Indirectly promotes efficient inorganic carbon uptake into chloroplasts. The polypeptide is Potassium/proton antiporter CemA (Nandina domestica (Heavenly bamboo)).